The primary structure comprises 140 residues: Small ribosomal subunit protein uS19 (140 aa).

Belongs to the universal ribosomal protein uS19 family.

In terms of biological role, protein S19 forms a complex with S13 that binds strongly to the 16S ribosomal RNA. This is Small ribosomal subunit protein uS19 (rps19) from Sulfurisphaera tokodaii (strain DSM 16993 / JCM 10545 / NBRC 100140 / 7) (Sulfolobus tokodaii).